The primary structure comprises 87 residues: MKKKPRRTRRPIAAPATPAKKNLLDSLGVSEVDYKDISRLRTFISDRGKIRSRRVTGLTVQQQRQIATAIKNAREMALLPYPASRPQ.

Belongs to the bacterial ribosomal protein bS18 family. As to quaternary structure, part of the 30S ribosomal subunit. Forms a tight heterodimer with protein bS6.

Binds as a heterodimer with protein bS6 to the central domain of the 16S rRNA, where it helps stabilize the platform of the 30S subunit. The chain is Small ribosomal subunit protein bS18B from Mycobacterium marinum (strain ATCC BAA-535 / M).